The primary structure comprises 506 residues: WD repeat-containing protein 55 homolog (506 aa).

Residues 1 to 11 show a composition bias toward basic and acidic residues; the sequence is MHRHDCFKTPA. 3 disordered regions span residues 1–20, 33–87, and 100–132; these read MHRH…DDID, QEVL…SDDS, and AKRR…DEDD. Residues 33 to 48 show a composition bias toward acidic residues; sequence QEVLNESESDDDEYDL. Over residues 61–74 the composition is skewed to low complexity; sequence GNISSNESISSDGS. Over residues 78 to 87 the composition is skewed to acidic residues; sequence NAEDTDSDDS. WD repeat units follow at residues 156-195, 200-239, 243-281, 284-323, 326-365, and 410-449; these read RLED…NKLL, VHAK…LKKL, AHDD…AIFE, EVED…LYVQ, PYEE…YHCD, and QHNM…DFGD. The disordered stretch occupies residues 480–506; that stretch reads DMTKEQDDDDNDDGGNNTTAAGSNNVT. Residues 493–506 show a composition bias toward low complexity; the sequence is GGNNTTAAGSNNVT.

Belongs to the WD repeat WDR55 family.

This chain is WD repeat-containing protein 55 homolog, found in Drosophila mojavensis (Fruit fly).